We begin with the raw amino-acid sequence, 107 residues long: Small ribosomal subunit protein uS10m (107 aa).

The protein belongs to the universal ribosomal protein uS10 family.

The protein resides in the mitochondrion. The protein is Small ribosomal subunit protein uS10m (RPS10) of Prototheca wickerhamii.